A 355-amino-acid chain; its full sequence is Heterogeneous nuclear ribonucleoprotein D0 (355 aa).

Residues 1–91 form a disordered region; that stretch reads MSEEQFGGDG…SSPRHTEAAA (91 aa). S2 carries the N-acetylserine modification. Low complexity predominate over residues 11–43; sequence AAAAATAAVGGSAGEQEGAMVAAAAQGPAAAAG. Over residues 44–58 the composition is skewed to gly residues; the sequence is SGSGGGGSAAGGTEG. Over residues 64-73 the composition is skewed to basic and acidic residues; it reads EGAKIDASKN. S71 is subject to Phosphoserine. K72 is covalently cross-linked (Glycyl lysine isopeptide (Lys-Gly) (interchain with G-Cter in SUMO2)). Phosphoserine is present on residues S80, S82, and S83. 2 RRM domains span residues 97–179 and 182–261; these read WKMF…KTKE and KKIF…MSKE. At K119 the chain carries N6-methyllysine. Residue T127 is modified to Phosphothreonine. K129 is covalently cross-linked (Glycyl lysine isopeptide (Lys-Gly) (interchain with G-Cter in SUMO2)). An N6-acetyllysine modification is found at K165. The residue at position 190 (S190) is a Phosphoserine. T193 carries the phosphothreonine modification. K197 participates in a covalent cross-link: Glycyl lysine isopeptide (Lys-Gly) (interchain with G-Cter in SUMO2). N6-acetyllysine occurs at positions 243 and 251. E261 and Y263 each carry omega-N-methylarginine. Residue S271 is modified to Phosphoserine. Residues R272, R278, R280, and R282 each carry the omega-N-methylarginine modification. An Asymmetric dimethylarginine; alternate modification is found at R345. At R345 the chain carries Dimethylated arginine; alternate. R345 bears the Omega-N-methylarginine; alternate mark.

In terms of assembly, identified in a IGF2BP1-dependent mRNP granule complex containing untranslated mRNAs. Part of a complex associated with the FOS mCRD domain and consisting of PABPC1, PAIP1, CSDE1/UNR and SYNCRIP. Interacts with IGF2BP2. Interacts with GTPBP1. Interacts with EIF4G1; the interaction requires RNA. Interacts with EIF3B and RPS3. Post-translationally, methylated by PRMT1, in an insulin-dependent manner. The PRMT1-mediated methylation regulates its phosphorylation. In terms of processing, arg-345 is dimethylated, probably to asymmetric dimethylarginine.

Its subcellular location is the nucleus. It localises to the cytoplasm. In terms of biological role, binds with high affinity to RNA molecules that contain AU-rich elements (AREs) found within the 3'-UTR of many proto-oncogenes and cytokine mRNAs. Also binds to double- and single-stranded DNA sequences in a specific manner and functions a transcription factor. Each of the RNA-binding domains specifically can bind solely to a single-stranded non-monotonous 5'-UUAG-3' sequence and also weaker to the single-stranded 5'-TTAGGG-3' telomeric DNA repeat. Binds RNA oligonucleotides with 5'-UUAGGG-3' repeats more tightly than the telomeric single-stranded DNA 5'-TTAGGG-3' repeats. Binding of RRM1 to DNA inhibits the formation of DNA quadruplex structure which may play a role in telomere elongation. May be involved in translationally coupled mRNA turnover. Implicated with other RNA-binding proteins in the cytoplasmic deadenylation/translational and decay interplay of the FOS mRNA mediated by the major coding-region determinant of instability (mCRD) domain. May play a role in the regulation of the rhythmic expression of circadian clock core genes. Directly binds to the 3'UTR of CRY1 mRNA and induces CRY1 rhythmic translation. May also be involved in the regulation of PER2 translation. This is Heterogeneous nuclear ribonucleoprotein D0 (Hnrnpd) from Mus musculus (Mouse).